The primary structure comprises 428 residues: Enolase (428 aa).

Glutamine 163 contacts (2R)-2-phosphoglycerate. The Proton donor role is filled by glutamate 205. Mg(2+)-binding residues include aspartate 242, glutamate 285, and aspartate 312. 4 residues coordinate (2R)-2-phosphoglycerate: lysine 337, arginine 366, serine 367, and lysine 388. The Proton acceptor role is filled by lysine 337.

It belongs to the enolase family. Requires Mg(2+) as cofactor.

Its subcellular location is the cytoplasm. The protein resides in the secreted. It localises to the cell surface. The catalysed reaction is (2R)-2-phosphoglycerate = phosphoenolpyruvate + H2O. Its pathway is carbohydrate degradation; glycolysis; pyruvate from D-glyceraldehyde 3-phosphate: step 4/5. Its function is as follows. Catalyzes the reversible conversion of 2-phosphoglycerate (2-PG) into phosphoenolpyruvate (PEP). It is essential for the degradation of carbohydrates via glycolysis. The protein is Enolase of Nitrosomonas eutropha (strain DSM 101675 / C91 / Nm57).